The chain runs to 353 residues: Quinolinate synthase (353 aa).

Iminosuccinate-binding residues include His47 and Ser68. Cys113 contributes to the [4Fe-4S] cluster binding site. Residues 139–141 (YAN) and Ser156 each bind iminosuccinate. A [4Fe-4S] cluster-binding site is contributed by Cys200. Iminosuccinate is bound by residues 226-228 (HPE) and Thr243. Cys297 contacts [4Fe-4S] cluster.

Belongs to the quinolinate synthase family. Type 1 subfamily. The cofactor is [4Fe-4S] cluster.

Its subcellular location is the cytoplasm. The catalysed reaction is iminosuccinate + dihydroxyacetone phosphate = quinolinate + phosphate + 2 H2O + H(+). The protein operates within cofactor biosynthesis; NAD(+) biosynthesis; quinolinate from iminoaspartate: step 1/1. Catalyzes the condensation of iminoaspartate with dihydroxyacetone phosphate to form quinolinate. In Photobacterium profundum (strain SS9), this protein is Quinolinate synthase.